The chain runs to 84 residues: RNA-binding protein Hfq (84 aa).

One can recognise a Sm domain in the interval Asp11–Ile71.

This sequence belongs to the Hfq family. In terms of assembly, homohexamer.

Its function is as follows. RNA chaperone that binds small regulatory RNA (sRNAs) and mRNAs to facilitate mRNA translational regulation in response to envelope stress, environmental stress and changes in metabolite concentrations. Also binds with high specificity to tRNAs. The protein is RNA-binding protein Hfq of Paramagnetospirillum magneticum (strain ATCC 700264 / AMB-1) (Magnetospirillum magneticum).